The sequence spans 100 residues: Large ribosomal subunit protein bL21 (100 aa).

The protein belongs to the bacterial ribosomal protein bL21 family. Part of the 50S ribosomal subunit. Contacts protein L20.

This protein binds to 23S rRNA in the presence of protein L20. This is Large ribosomal subunit protein bL21 from Deinococcus deserti (strain DSM 17065 / CIP 109153 / LMG 22923 / VCD115).